Here is a 427-residue protein sequence, read N- to C-terminus: N-myc proto-oncogene protein (427 aa).

4 disordered regions span residues 45–79 (FELL…SVGL), 144–173 (EKLQ…SGRA), 195–255 (AAEG…STNK), and 297–349 (APSP…RNHN). Pro residues-rich tracts occupy residues 49–61 (PTPP…PAPG) and 152–167 (AAPP…PPVP). The span at 210-221 (RASSSSSSSGDD) shows a compositional bias: low complexity. Over residues 222–242 (TLSDSEDDEDEEEEDEEEEID) the composition is skewed to acidic residues. Ser224 and Ser226 each carry phosphoserine; by CK2. The bHLH domain occupies 343 to 396 (ERRRNHNILERQRANDLRSSFLTLRDHVLSELVQNEKAAKVVILKKATEYVHSL). Residues 396-417 (LQAEEQKLLLEKEKLQARQEQL) are leucine-zipper.

Efficient DNA binding requires dimerization with another bHLH protein. Binds DNA as a heterodimer with MAX.

The protein localises to the nucleus. The chain is N-myc proto-oncogene protein (MYCN) from Serinus canaria (Island canary).